A 494-amino-acid chain; its full sequence is Neuronal acetylcholine receptor subunit alpha-6 (494 aa).

The first 31 residues, 1-31 (MHPKRRLCWCLPASGAWAFMLTSLIADTTAC), serve as a signal peptide directing secretion. The Extracellular portion of the chain corresponds to 32-240 (ESEERLFHKL…TYSFYIRRLP (209 aa)). 2 N-linked (GlcNAc...) asparagine glycosylation sites follow: Asn-54 and Asn-171. Residues Cys-158 and Cys-172 are joined by a disulfide bond. 3 consecutive transmembrane segments (helical) span residues 241 to 265 (MFYT…FYLP), 272 to 290 (VTLC…LVIT), and 306 to 327 (YLLF…VLNI). Topologically, residues 328 to 468 (HYRTPTTHTM…WKYVAMVIDR (141 aa)) are cytoplasmic. The interval 364–390 (KNISKKTKKGSAKTSGKSKHSKHKDNK) is disordered. Residues 366–390 (ISKKTKKGSAKTSGKSKHSKHKDNK) show a composition bias toward basic residues. Residues 469–489 (VFLWVFIILCVFGTAGLFIQP) form a helical membrane-spanning segment.

Belongs to the ligand-gated ion channel (TC 1.A.9) family. Acetylcholine receptor (TC 1.A.9.1) subfamily. Alpha-6/CHRNA6 sub-subfamily. Neuronal AChR is composed of two different types of subunits: alpha and non-alpha (beta). CHRNA6/alpha-6 subunit can be combined to CHRNB2/beta-2, CHRNA4/alpha-4 and CHRNB3/beta-3 to give rise to functional receptors. Heteropentamers containing CHRNB3 have an stoichiometry of (CHRNA6:CHRNB2)2:CHRNB3. Interacts with LYPD6.

The protein resides in the synaptic cell membrane. It catalyses the reaction K(+)(in) = K(+)(out). It carries out the reaction Na(+)(in) = Na(+)(out). The enzyme catalyses Ca(2+)(in) = Ca(2+)(out). With respect to regulation, activated by a myriad of ligands such as acetylcholine, cytisine and nicotine. CHRNA6 nAChR activity is inhibited by the antagonists alpha-conotoxin MII and PIA, a small disulfide-constrained peptides from cone snails. Component of neuronal acetylcholine receptors (nAChRs) that function as pentameric, ligand-gated cation channels with high calcium permeability among other activities. nAChRs are excitatory neurotrasnmitter receptors formed by a collection of nAChR subunits known to mediate synaptic transmission in the nervous system and the neuromuscular junction. Each nAchR subunit confers differential attributes to channel properties, including activation, deactivation and desensitization kinetics, pH sensitivity, cation permeability, and binding to allosteric modulators. CHRNA6 forms pentameric channels with CHRNB2 and CHRNA4 that exhibit high sensitivity to ACh and nicotine and are predominantly expressed in only a few brain areas, including dopaminergic neurons, norepirephrine neurons and cells of the visual system. nAChrs containing CHRNA6 subunits mediate endogenous cholinergic modulation of dopamine and gamma-aminobutyric acid (GABA) release in response to nicotine at nerve terminals. In terms of biological role, component of neuronal acetylcholine receptors (nAChRs) that function as pentameric, ligand-gated cation channels with high calcium permeability among other activities. nAChRs are excitatory neurotrasnmitter receptors formed by a collection of nAChR subunits known to mediate synaptic transmission in the nervous system and the neuromuscular junction. Each nAchR subunit confers differential attributes to channel properties, including activation, deactivation and desensitization kinetics, pH sensitivity, cation permeability, and binding to allosteric modulators. CHRNA6 forms pentameric channels with CHRNB2, CHRNB3 and CHRNA4 that exhibit high sensitivity to ACh and nicotine and are predominantly expressed in only a few brain areas, including dopaminergic neurons, norepirephrine neurons and cells of the visual system. nAChrs containing CHRNA6 subunits mediate endogenous cholinergic modulation of dopamine and gamma-aminobutyric acid (GABA) release in response to nicotine at nerve terminals. This chain is Neuronal acetylcholine receptor subunit alpha-6 (CHRNA6), found in Gallus gallus (Chicken).